The chain runs to 232 residues: Orotidine 5'-phosphate decarboxylase (232 aa).

Residues aspartate 11, lysine 33, 60-69 (DLKFHDIPNT), threonine 120, arginine 181, glutamine 190, glycine 210, and arginine 211 each bind substrate. Catalysis depends on lysine 62, which acts as the Proton donor.

This sequence belongs to the OMP decarboxylase family. Type 1 subfamily. As to quaternary structure, homodimer.

The catalysed reaction is orotidine 5'-phosphate + H(+) = UMP + CO2. The protein operates within pyrimidine metabolism; UMP biosynthesis via de novo pathway; UMP from orotate: step 2/2. In terms of biological role, catalyzes the decarboxylation of orotidine 5'-monophosphate (OMP) to uridine 5'-monophosphate (UMP). This Vibrio vulnificus (strain YJ016) protein is Orotidine 5'-phosphate decarboxylase.